The sequence spans 482 residues: tRNA sulfurtransferase (482 aa).

The THUMP domain maps to 61 to 165; the sequence is LTIRDALTRI…DDRLLLIKGR (105 aa). Residues 183–184, K265, G287, and Q296 each bind ATP; that span reads LI. A disulfide bridge connects residues C344 and C456. The region spanning 404 to 482 is the Rhodanese domain; sequence CGPNDVILDI…GFNNVKVYRP (79 aa). The active-site Cysteine persulfide intermediate is C456.

This sequence belongs to the ThiI family.

The protein localises to the cytoplasm. It catalyses the reaction [ThiI sulfur-carrier protein]-S-sulfanyl-L-cysteine + a uridine in tRNA + 2 reduced [2Fe-2S]-[ferredoxin] + ATP + H(+) = [ThiI sulfur-carrier protein]-L-cysteine + a 4-thiouridine in tRNA + 2 oxidized [2Fe-2S]-[ferredoxin] + AMP + diphosphate. The catalysed reaction is [ThiS sulfur-carrier protein]-C-terminal Gly-Gly-AMP + S-sulfanyl-L-cysteinyl-[cysteine desulfurase] + AH2 = [ThiS sulfur-carrier protein]-C-terminal-Gly-aminoethanethioate + L-cysteinyl-[cysteine desulfurase] + A + AMP + 2 H(+). It functions in the pathway cofactor biosynthesis; thiamine diphosphate biosynthesis. In terms of biological role, catalyzes the ATP-dependent transfer of a sulfur to tRNA to produce 4-thiouridine in position 8 of tRNAs, which functions as a near-UV photosensor. Also catalyzes the transfer of sulfur to the sulfur carrier protein ThiS, forming ThiS-thiocarboxylate. This is a step in the synthesis of thiazole, in the thiamine biosynthesis pathway. The sulfur is donated as persulfide by IscS. In Shigella dysenteriae serotype 1 (strain Sd197), this protein is tRNA sulfurtransferase.